Consider the following 213-residue polypeptide: Gas vesicle protein F (213 aa).

Belongs to the gas vesicle GvpF/GvpL family. As to quaternary structure, binds GvpA.

It localises to the gas vesicle. Functionally, a minor component of the gas vesicle, may be involved in preventing GvpA aggregation during gas vesicle nucleation. Gas vesicles are hollow, gas filled proteinaceous nanostructures found in some microorganisms. They allow positioning of halobacteria at the optimal depth for growth in the poorly aerated, shallow brine pools of their habitat. In terms of biological role, expression of a 9.5 kb mc-vac DNA fragment containing 2 divergently transcribed regions (gvpD-gvpE-gvpF-gvpG-gvpH-gvpI-gvpJ-gvpK-gvpL-gvpM and gvpA-gvpC-gvpN-gvpO) allows H.volcanii to produce gas vesicles. The sequence is that of Gas vesicle protein F from Haloferax mediterranei (strain ATCC 33500 / DSM 1411 / JCM 8866 / NBRC 14739 / NCIMB 2177 / R-4) (Halobacterium mediterranei).